We begin with the raw amino-acid sequence, 315 residues long: Protoheme IX farnesyltransferase 1 (315 aa).

8 helical membrane passes run 30-50 (PGII…AWIQ), 56-76 (GGPG…LVMA), 106-126 (IPPP…FIML), 132-152 (LTAV…TLWF), 162-182 (VGSF…TGYI), 186-206 (AILL…AIGI), 249-269 (LYID…AIWL), and 289-309 (FFYS…DSFI).

It belongs to the UbiA prenyltransferase family. Protoheme IX farnesyltransferase subfamily. Interacts with CtaA.

The protein resides in the cell membrane. It carries out the reaction heme b + (2E,6E)-farnesyl diphosphate + H2O = Fe(II)-heme o + diphosphate. Its pathway is porphyrin-containing compound metabolism; heme O biosynthesis; heme O from protoheme: step 1/1. Its function is as follows. Converts heme B (protoheme IX) to heme O by substitution of the vinyl group on carbon 2 of heme B porphyrin ring with a hydroxyethyl farnesyl side group. The polypeptide is Protoheme IX farnesyltransferase 1 (Bacillus velezensis (strain DSM 23117 / BGSC 10A6 / LMG 26770 / FZB42) (Bacillus amyloliquefaciens subsp. plantarum)).